The chain runs to 454 residues: tRNA modification GTPase MnmE (454 aa).

Residues arginine 23, glutamate 80, and lysine 120 each coordinate (6S)-5-formyl-5,6,7,8-tetrahydrofolate. The region spanning glycine 216–glycine 377 is the TrmE-type G domain. Asparagine 226 is a binding site for K(+). Residues asparagine 226–serine 231, threonine 245–threonine 251, aspartate 270–glycine 273, asparagine 335–aspartate 338, and serine 358–arginine 360 contribute to the GTP site. Serine 230 serves as a coordination point for Mg(2+). Positions 245, 247, and 250 each coordinate K(+). Threonine 251 is a Mg(2+) binding site. Position 454 (lysine 454) interacts with (6S)-5-formyl-5,6,7,8-tetrahydrofolate.

Belongs to the TRAFAC class TrmE-Era-EngA-EngB-Septin-like GTPase superfamily. TrmE GTPase family. As to quaternary structure, homodimer. Heterotetramer of two MnmE and two MnmG subunits. K(+) serves as cofactor.

Its subcellular location is the cytoplasm. Exhibits a very high intrinsic GTPase hydrolysis rate. Involved in the addition of a carboxymethylaminomethyl (cmnm) group at the wobble position (U34) of certain tRNAs, forming tRNA-cmnm(5)s(2)U34. This chain is tRNA modification GTPase MnmE, found in Shigella boydii serotype 18 (strain CDC 3083-94 / BS512).